Reading from the N-terminus, the 587-residue chain is MMGENSSAYTTLADNQLYNQFSPSRRKADLIASTSATSSPNLRKSPNRGFSSPRAQQKPITIFDQIVSWFHSEIDVRKKLASFVCGAAVALSFIVTVSILKLSIWAPFSSVQDSLTWWLYPTSWPVTLFIWLSSVAWTFLIIHQFCTVTQVPRIPITDTYAWAGAALEFVHRLIFVYTAFTVSESSFFEDFAWIAIAFSVAISSALVIFRSDFHLNFSNVQVNSFKTLIDFAKSLPYGSLAETSGVDAAIAYTAAMALTVFGSPLLWGFSAWWLLINIQFHLVLFGVCFAQQFFAKIFMKIVNQIVMKPMKFPFPPPYTVHSPTPDQIRTLPNVIETDDPLLKMFALHDLRTVAWEDEKRRVDVFSLSQPGKHPRNWKAVSMPCTRMLDELCSRMTVSAARLVGYSWDDHDVENEEVPRDALMMPRKMREMTYRGAGQSRQQKTIAPIRSNNTQTVGFLAKITRNLGLGKTERLVISRFDAQQNAYAAEAVYMLVVDSMGEDRFGVVQKDLKDLITLLCKLIAAIDTYERAKASVADKSDVTYLRLVDASLKSCLQRVVTTFGSHLRSLELADEHIRTIKLVCAEEI.

The Cytoplasmic segment spans residues 1 to 79 (MMGENSSAYT…FHSEIDVRKK (79 aa)). The tract at residues 32–55 (ASTSATSSPNLRKSPNRGFSSPRA) is disordered. A helical membrane pass occupies residues 80-100 (LASFVCGAAVALSFIVTVSIL). Residues 101 to 121 (KLSIWAPFSSVQDSLTWWLYP) lie on the Perinuclear space side of the membrane. The chain crosses the membrane as a helical span at residues 122–142 (TSWPVTLFIWLSSVAWTFLII). The Cytoplasmic segment spans residues 143–161 (HQFCTVTQVPRIPITDTYA). The chain crosses the membrane as a helical span at residues 162-182 (WAGAALEFVHRLIFVYTAFTV). At 183-187 (SESSF) the chain is on the perinuclear space side. A helical transmembrane segment spans residues 188-208 (FEDFAWIAIAFSVAISSALVI). Residues 209 to 255 (FRSDFHLNFSNVQVNSFKTLIDFAKSLPYGSLAETSGVDAAIAYTAA) lie on the Cytoplasmic side of the membrane. Residues 256–276 (MALTVFGSPLLWGFSAWWLLI) traverse the membrane as a helical segment. The Perinuclear space portion of the chain corresponds to 277–281 (NIQFH). A helical membrane pass occupies residues 282–302 (LVLFGVCFAQQFFAKIFMKIV). The Cytoplasmic segment spans residues 303–587 (NQIVMKPMKF…TIKLVCAEEI (285 aa)).

Belongs to the NDC1 family.

The protein localises to the nucleus. It localises to the nuclear pore complex. It is found in the nucleus membrane. Component of the nuclear pore complex (NPC), which plays a key role in de novo assembly and insertion of NPC in the nuclear envelope. The sequence is that of Nucleoporin ndc-1 (npp-22) from Caenorhabditis briggsae.